The following is a 127-amino-acid chain: Phosphoribosyl-AMP cyclohydrolase (127 aa).

Aspartate 75 lines the Mg(2+) pocket. Cysteine 76 contacts Zn(2+). Mg(2+) is bound by residues aspartate 77 and aspartate 79. Residues cysteine 93 and cysteine 100 each coordinate Zn(2+).

It belongs to the PRA-CH family. Homodimer. Mg(2+) is required as a cofactor. The cofactor is Zn(2+).

Its subcellular location is the cytoplasm. The catalysed reaction is 1-(5-phospho-beta-D-ribosyl)-5'-AMP + H2O = 1-(5-phospho-beta-D-ribosyl)-5-[(5-phospho-beta-D-ribosylamino)methylideneamino]imidazole-4-carboxamide. The protein operates within amino-acid biosynthesis; L-histidine biosynthesis; L-histidine from 5-phospho-alpha-D-ribose 1-diphosphate: step 3/9. Its function is as follows. Catalyzes the hydrolysis of the adenine ring of phosphoribosyl-AMP. In Desulfotalea psychrophila (strain LSv54 / DSM 12343), this protein is Phosphoribosyl-AMP cyclohydrolase.